Reading from the N-terminus, the 852-residue chain is Tiger protein I3 (852 aa).

Residues 1-18 (MKILLFFILFYLFSFSIS) form the signal peptide. At 19 to 830 (YDEVIPLGYE…DVHQYSDARN (812 aa)) the chain is on the extracellular side. N-linked (GlcNAc...) asparagine glycans are attached at residues asparagine 31, asparagine 47, asparagine 67, asparagine 97, asparagine 129, asparagine 201, asparagine 215, asparagine 228, asparagine 260, asparagine 323, asparagine 352, asparagine 356, asparagine 404, asparagine 441, asparagine 476, asparagine 483, asparagine 501, asparagine 512, asparagine 574, asparagine 592, asparagine 635, asparagine 658, asparagine 661, asparagine 679, asparagine 680, asparagine 723, asparagine 757, asparagine 761, asparagine 773, asparagine 785, and asparagine 800. An IPT/TIG domain is found at 290-367 (IPSIVNSIPK…SSPIAVSIND (78 aa)). A helical membrane pass occupies residues 831-851 (IFQNLLLSILIIIIISLFISN). A topological domain (cytoplasmic) is located at residue isoleucine 852.

It localises to the membrane. This is Tiger protein I3 (tgrI3) from Dictyostelium discoideum (Social amoeba).